Here is a 378-residue protein sequence, read N- to C-terminus: Glutamate 5-kinase (378 aa).

Lysine 17 serves as a coordination point for ATP. Substrate-binding residues include serine 58, aspartate 145, and asparagine 157. Residues 177–178 (TD) and 221–227 (TGGMMTK) contribute to the ATP site. Positions 286 to 364 (VGKLYLDSGA…KEIPTILGYV (79 aa)) constitute a PUA domain.

Belongs to the glutamate 5-kinase family.

It is found in the cytoplasm. The enzyme catalyses L-glutamate + ATP = L-glutamyl 5-phosphate + ADP. It functions in the pathway amino-acid biosynthesis; L-proline biosynthesis; L-glutamate 5-semialdehyde from L-glutamate: step 1/2. Catalyzes the transfer of a phosphate group to glutamate to form L-glutamate 5-phosphate. The protein is Glutamate 5-kinase of Nostoc sp. (strain PCC 7120 / SAG 25.82 / UTEX 2576).